We begin with the raw amino-acid sequence, 534 residues long: Serine/threonine-protein kinase Nek6 (534 aa).

Residues 4–257 enclose the Protein kinase domain; the sequence is YEVVEQIGRG…AGELLRHPYL (254 aa). ATP-binding positions include 10-18 and Lys-33; that span reads IGRGAYGSA. Asp-129 serves as the catalytic Proton acceptor. 2 disordered regions span residues 278-306 and 425-449; these read KSNL…SSEA and KAHT…SSPK.

This sequence belongs to the protein kinase superfamily. NEK Ser/Thr protein kinase family. NIMA subfamily. As to quaternary structure, interacts with DIS1. Ubiquitinated by the E3 ligase DIS1. Ubiquitination of NEK6 leads to its degradation via the 26S proteasome-dependent pathway. In terms of tissue distribution, expressed in anthers, pistils and leaves.

The protein localises to the cytoplasm. The enzyme catalyses L-seryl-[protein] + ATP = O-phospho-L-seryl-[protein] + ADP + H(+). It catalyses the reaction L-threonyl-[protein] + ATP = O-phospho-L-threonyl-[protein] + ADP + H(+). Functionally, may be involved in plant development processes. This Oryza sativa subsp. japonica (Rice) protein is Serine/threonine-protein kinase Nek6.